A 373-amino-acid polypeptide reads, in one-letter code: Citrate synthase (373 aa).

Active-site residues include histidine 262 and aspartate 314.

It belongs to the citrate synthase family. Homohexamer.

The enzyme catalyses oxaloacetate + acetyl-CoA + H2O = citrate + CoA + H(+). Its pathway is carbohydrate metabolism; tricarboxylic acid cycle; isocitrate from oxaloacetate: step 1/2. This chain is Citrate synthase (ctsA), found in Heyndrickxia coagulans (Weizmannia coagulans).